The following is a 430-amino-acid chain: S-adenosylmethionine synthase (430 aa).

An ATP-binding site is contributed by His14. Asp16 contacts Mg(2+). Glu42 contributes to the K(+) binding site. L-methionine contacts are provided by Glu55 and Gln98. The segment at 98–108 (QSADINRGVER) is flexible loop. Residues 164 to 166 (DAK), 254 to 255 (KF), Asp263, 269 to 270 (RK), Ala286, and Lys290 each bind ATP. Asp263 lines the L-methionine pocket. Lys294 lines the L-methionine pocket.

Belongs to the AdoMet synthase family. In terms of assembly, homotetramer; dimer of dimers. Mg(2+) is required as a cofactor. Requires K(+) as cofactor.

The protein resides in the cytoplasm. It catalyses the reaction L-methionine + ATP + H2O = S-adenosyl-L-methionine + phosphate + diphosphate. It participates in amino-acid biosynthesis; S-adenosyl-L-methionine biosynthesis; S-adenosyl-L-methionine from L-methionine: step 1/1. Functionally, catalyzes the formation of S-adenosylmethionine (AdoMet) from methionine and ATP. The overall synthetic reaction is composed of two sequential steps, AdoMet formation and the subsequent tripolyphosphate hydrolysis which occurs prior to release of AdoMet from the enzyme. In Bacteroides fragilis (strain ATCC 25285 / DSM 2151 / CCUG 4856 / JCM 11019 / LMG 10263 / NCTC 9343 / Onslow / VPI 2553 / EN-2), this protein is S-adenosylmethionine synthase.